The following is a 562-amino-acid chain: MKDRVRSLVAEGIERCFADGSLASNQMPAIVIEKPAHAEHGDFACTVAMSMAKAERKAPRVIAETIVKHIENGESGIIGGIDIAGPGFINFRIKNEAWSRTLAVVEAAGASFGRSCAGEERKVQVEFVSANPTGPLHIGHGRGAAIGDTICRLLSASGFDVTREFYYNDAGAQIANLALSVQSRCLGIEPGDPRWPADGYQGDYIKDVARSYLNRETVDAGDQHVTAAGDPNDLDAIRRFAVAYLRREQDQDLLAFDVHFDVYSLESSLYTEGRVEEVVRRLIENGHTFEQDGALWLRTTDFGDDKDRVMRKSDGSYTYFVPDVAYHLAKWERGFTRVINEQGADHHSTITRVRAGLQALNAGIPQEWPEYVLHQMVTVMRGGEEVKISKRAGSYVTLRDLIDEVGRDATRFFFLMRKPDSQLVFDIDLAKQQSLENPVYYVQYAHARISSIFEAACDRGISVPSFPDAHVDLLETPEEIELIKLIGSFPEVIEGSALSFEPHRITYYLQELAGAFHSFYNKNRVIGEGKELSSARLFLLKGVAQVLKNGLALLGVSAPEKM.

Positions Ala-130–His-140 match the 'HIGH' region motif.

The protein belongs to the class-I aminoacyl-tRNA synthetase family. Monomer.

It is found in the cytoplasm. It catalyses the reaction tRNA(Arg) + L-arginine + ATP = L-arginyl-tRNA(Arg) + AMP + diphosphate. The polypeptide is Arginine--tRNA ligase (Geobacter metallireducens (strain ATCC 53774 / DSM 7210 / GS-15)).